A 128-amino-acid polypeptide reads, in one-letter code: Large ribosomal subunit protein uL22 (128 aa).

Belongs to the universal ribosomal protein uL22 family. In terms of assembly, part of the 50S ribosomal subunit.

Functionally, this protein binds specifically to 23S rRNA; its binding is stimulated by other ribosomal proteins, e.g. L4, L17, and L20. It is important during the early stages of 50S assembly. It makes multiple contacts with different domains of the 23S rRNA in the assembled 50S subunit and ribosome. Its function is as follows. The globular domain of the protein is located near the polypeptide exit tunnel on the outside of the subunit, while an extended beta-hairpin is found that lines the wall of the exit tunnel in the center of the 70S ribosome. In Methylobacterium radiotolerans (strain ATCC 27329 / DSM 1819 / JCM 2831 / NBRC 15690 / NCIMB 10815 / 0-1), this protein is Large ribosomal subunit protein uL22.